A 345-amino-acid chain; its full sequence is Biotin synthase (345 aa).

A Radical SAM core domain is found at 67 to 295 (YKVQLASLLS…KSRIRLSAGR (229 aa)). Positions 82, 86, and 89 each coordinate [4Fe-4S] cluster. [2Fe-2S] cluster is bound by residues Cys-126, Cys-158, Cys-218, and Arg-290.

It belongs to the radical SAM superfamily. Biotin synthase family. As to quaternary structure, homodimer. [4Fe-4S] cluster serves as cofactor. [2Fe-2S] cluster is required as a cofactor.

The enzyme catalyses (4R,5S)-dethiobiotin + (sulfur carrier)-SH + 2 reduced [2Fe-2S]-[ferredoxin] + 2 S-adenosyl-L-methionine = (sulfur carrier)-H + biotin + 2 5'-deoxyadenosine + 2 L-methionine + 2 oxidized [2Fe-2S]-[ferredoxin]. It functions in the pathway cofactor biosynthesis; biotin biosynthesis; biotin from 7,8-diaminononanoate: step 2/2. In terms of biological role, catalyzes the conversion of dethiobiotin (DTB) to biotin by the insertion of a sulfur atom into dethiobiotin via a radical-based mechanism. The chain is Biotin synthase from Prochlorococcus marinus (strain NATL2A).